A 283-amino-acid chain; its full sequence is Putative cuticle collagen 79 (283 aa).

The segment at 59 to 283 (FKQQSSPPSP…ARSISKVAIQ (225 aa)) is disordered. 3 triple-helical region regions span residues 94 to 122 (GPPG…ENGG), 139 to 201 (GPRG…PGRK), and 204 to 269 (GEAG…DGAY). Pro residues predominate over residues 137 to 146 (PPGPRGPPGP). Residues 226 to 240 (TDGDDGVDGQPGDEG) show a composition bias toward acidic residues. The span at 253–265 (PQGEQGTEGQPGT) shows a compositional bias: low complexity.

The protein belongs to the cuticular collagen family. In terms of assembly, collagen polypeptide chains are complexed within the cuticle by disulfide bonds and other types of covalent cross-links.

In terms of biological role, nematode cuticles are composed largely of collagen-like proteins. The cuticle functions both as an exoskeleton and as a barrier to protect the worm from its environment. This is Putative cuticle collagen 79 (col-79) from Caenorhabditis elegans.